The following is a 375-amino-acid chain: Tubulinyl-Tyr carboxypeptidase 1 (375 aa).

The segment covering 1 to 33 (MPGGKKVVPSGSSSASPNAAATTTAAAAAAAAA) has biased composition (low complexity). The segment at 1–69 (MPGGKKVVPS…EEDLRDGGVP (69 aa)) is disordered. Positions 53-63 (EEPEEEGEEDL) are enriched in acidic residues. Active-site residues include Cys-179, His-214, and Ser-231. Residues 309-375 (RDMRLKIGKG…PDLSGYQIRV (67 aa)) are disordered. Positions 329–375 (KKDVSSPQRAQSSPHRRNSRSERRPSGEKKPAEPKAMPDLSGYQIRV) are involved in heparin-binding and antiangiogenic activity. Residues 347–361 (SRSERRPSGEKKPAE) are compositionally biased toward basic and acidic residues.

This sequence belongs to the transglutaminase-like superfamily. Vasohibin family. Interacts with SVBP; interaction enhances VASH1 tyrosine carboxypeptidase activity. Post-translationally, ubiquitinated in vitro. In terms of tissue distribution, expressed at low level in proliferating endothelial cells at the sprouting front but highly expressed in nonproliferating endothelial cells in the termination zone.

Its subcellular location is the cytoplasm. The protein localises to the secreted. It catalyses the reaction C-terminal L-alpha-aminoacyl-L-glutamyl-L-glutamyl-L-tyrosyl-[tubulin] + H2O = C-terminal L-alpha-aminoacyl-L-glutamyl-L-glutamyl-[tubulin] + L-tyrosine. Its function is as follows. Tyrosine carboxypeptidase that removes the C-terminal tyrosine residue of alpha-tubulin, thereby regulating microtubule dynamics and function. Acts as an angiogenesis inhibitor: inhibits migration, proliferation and network formation by endothelial cells as well as angiogenesis. This inhibitory effect is selective to endothelial cells as it does not affect the migration of smooth muscle cells or fibroblasts. The sequence is that of Tubulinyl-Tyr carboxypeptidase 1 from Mus musculus (Mouse).